We begin with the raw amino-acid sequence, 384 residues long: 1-deoxy-D-xylulose 5-phosphate reductoisomerase (384 aa).

Residues Thr-10, Gly-11, Ser-12, Ile-13, Gly-36, and Asn-122 each coordinate NADPH. A 1-deoxy-D-xylulose 5-phosphate-binding site is contributed by Lys-123. NADPH is bound at residue Glu-124. Residue Asp-148 coordinates Mn(2+). Residues Ser-149, Glu-150, Ser-174, and His-197 each coordinate 1-deoxy-D-xylulose 5-phosphate. A Mn(2+)-binding site is contributed by Glu-150. An NADPH-binding site is contributed by Gly-203. 1-deoxy-D-xylulose 5-phosphate contacts are provided by Ser-210, Asn-215, Lys-216, and Glu-219. Residue Glu-219 participates in Mn(2+) binding.

The protein belongs to the DXR family. The cofactor is Mg(2+). Mn(2+) serves as cofactor.

It carries out the reaction 2-C-methyl-D-erythritol 4-phosphate + NADP(+) = 1-deoxy-D-xylulose 5-phosphate + NADPH + H(+). It participates in isoprenoid biosynthesis; isopentenyl diphosphate biosynthesis via DXP pathway; isopentenyl diphosphate from 1-deoxy-D-xylulose 5-phosphate: step 1/6. Functionally, catalyzes the NADPH-dependent rearrangement and reduction of 1-deoxy-D-xylulose-5-phosphate (DXP) to 2-C-methyl-D-erythritol 4-phosphate (MEP). In Chlorobium phaeobacteroides (strain DSM 266 / SMG 266 / 2430), this protein is 1-deoxy-D-xylulose 5-phosphate reductoisomerase.